The sequence spans 494 residues: DUF21 domain-containing protein At4g14240 (494 aa).

At 1 to 43 (MHLINAVAAARILSGIGQSNGNNGGEAIPFGSFEWITYAGISC) the chain is on the extracellular side. Residues 31–213 (GSFEWITYAG…GKGGELTHDE (183 aa)) enclose the CNNM transmembrane domain. A helical membrane pass occupies residues 44–64 (FLVLFAGIMSGLTLGLMSLGL). Residues 65-93 (VELEILQRSGTPNEKKQAAAIFPVVQKQH) lie on the Cytoplasmic side of the membrane. A helical transmembrane segment spans residues 94–114 (QLLVTLLLCNAMAMEGLPIYL). The Extracellular segment spans residues 115 to 121 (DKLFNEY). A helical membrane pass occupies residues 122-142 (VAIILSVTFVLAFGEVIPQAI). Over 143–159 (CTRYGLAVGANFVWLVR) the chain is Cytoplasmic. The chain crosses the membrane as a helical span at residues 160 to 180 (ILMTLCYPIAFPIGKILDLVL). Residues 181–494 (GHNDALFRRA…TITEPIRRNN (314 aa)) are Extracellular-facing. CBS domains follow at residues 232-292 (MTPI…TETL), 297-352 (CIRR…SNDS), and 364-425 (GNHD…IVDE). 2 N-linked (GlcNAc...) asparagine glycosylation sites follow: Asn350 and Asn385. The interval 459–494 (QKGTGGQNKQGQTNKVPGQEQDKMLGTITEPIRRNN) is disordered.

The protein resides in the membrane. The chain is DUF21 domain-containing protein At4g14240 (CBSDUF1) from Arabidopsis thaliana (Mouse-ear cress).